The primary structure comprises 114 residues: Class I hydrophobin 6 (114 aa).

An N-terminal signal peptide occupies residues 1–19; the sequence is MLFKQLILVATALTTLAVA. 4 disulfides stabilise this stretch: Cys33-Cys93, Cys40-Cys87, Cys41-Cys74, and Cys94-Cys107. N-linked (GlcNAc...) asparagine glycosylation occurs at Asn42.

It belongs to the fungal hydrophobin family. As to quaternary structure, self-assembles to form functional amyloid fibrils called rodlets. Self-assembly into fibrillar rodlets occurs spontaneously at hydrophobic:hydrophilic interfaces and the rodlets further associate laterally to form amphipathic monolayers.

It is found in the secreted. The protein resides in the cell wall. Aerial growth, conidiation, and dispersal of filamentous fungi in the environment rely upon a capability of their secreting small amphipathic proteins called hydrophobins (HPBs) with low sequence identity. Class I can self-assemble into an outermost layer of rodlet bundles on aerial cell surfaces, conferring cellular hydrophobicity that supports fungal growth, development and dispersal; whereas Class II form highly ordered films at water-air interfaces through intermolecular interactions but contribute nothing to the rodlet structure. The polypeptide is Class I hydrophobin 6 (Pleurotus ostreatus (strain PC15) (Oyster mushroom)).